The chain runs to 540 residues: 2,3-bisphosphoglycerate-independent phosphoglycerate mutase (540 aa).

The Mn(2+) site is built by aspartate 13 and serine 63. The active-site Phosphoserine intermediate is serine 63. Residues histidine 124, 154 to 155 (RD), arginine 186, arginine 192, 262 to 265 (RPDR), and lysine 356 each bind substrate. Mn(2+) contacts are provided by aspartate 423, histidine 427, aspartate 464, histidine 465, and histidine 483.

Belongs to the BPG-independent phosphoglycerate mutase family. Monomer. It depends on Mn(2+) as a cofactor.

The catalysed reaction is (2R)-2-phosphoglycerate = (2R)-3-phosphoglycerate. It participates in carbohydrate degradation; glycolysis; pyruvate from D-glyceraldehyde 3-phosphate: step 3/5. In terms of biological role, catalyzes the interconversion of 2-phosphoglycerate and 3-phosphoglycerate. The polypeptide is 2,3-bisphosphoglycerate-independent phosphoglycerate mutase (Chloroflexus aurantiacus (strain ATCC 29366 / DSM 635 / J-10-fl)).